The sequence spans 123 residues: Small ribosomal subunit protein uS13c (123 aa).

Positions 99-123 (GQRTRSNARTRRGAKKTVAGKKLAK) are disordered. The segment covering 100–123 (QRTRSNARTRRGAKKTVAGKKLAK) has biased composition (basic residues).

This sequence belongs to the universal ribosomal protein uS13 family. Part of the 30S ribosomal subunit.

It is found in the plastid. The protein resides in the chloroplast. In terms of biological role, located at the top of the head of the 30S subunit, it contacts several helices of the 16S rRNA. In Cyanidioschyzon merolae (strain NIES-3377 / 10D) (Unicellular red alga), this protein is Small ribosomal subunit protein uS13c.